A 527-amino-acid chain; its full sequence is EGF domain-specific O-linked N-acetylglucosamine transferase (527 aa).

Positions 1-17 (MFMLLVFGALLPEVPLS) are cleaved as a signal peptide. Residues 295–297 (DYD) carry the Required for optimal activity motif. Residue Asn-354 is glycosylated (N-linked (GlcNAc...) asparagine). The Prevents secretion from ER motif lies at 524–527 (HDEL).

This sequence belongs to the glycosyltransferase 61 family.

It localises to the endoplasmic reticulum lumen. The catalysed reaction is L-seryl-[protein] + UDP-N-acetyl-alpha-D-glucosamine = 3-O-(N-acetyl-beta-D-glucosaminyl)-L-seryl-[protein] + UDP + H(+). It catalyses the reaction L-threonyl-[protein] + UDP-N-acetyl-alpha-D-glucosamine = 3-O-(N-acetyl-beta-D-glucosaminyl)-L-threonyl-[protein] + UDP + H(+). In terms of biological role, catalyzes the transfer of a single N-acetylglucosamine from UDP-GlcNAc to a serine or threonine residue in extracellular proteins resulting in their modification with a beta-linked N-acetylglucosamine (O-GlcNAc). Specifically glycosylates the Thr residue located between the fifth and sixth conserved cysteines of folded EGF-like domains. The sequence is that of EGF domain-specific O-linked N-acetylglucosamine transferase (EOGT) from Bos taurus (Bovine).